We begin with the raw amino-acid sequence, 959 residues long: MMS19 nucleotide excision repair protein (959 aa).

4 HEAT repeats span residues 794–828, 832–871, 874–915, and 918–956; these read QKLFHTIMGKMGSKLANYCVHHLKAFVYVLKATPQ, KLNIEQLGPLLFKSLEEHNEAQSLCIALGICEKFVAQQDT, QGHL…YPTF, and LPHKVDVTLALAAALDDPKRLVRNTAVKARNAWYLVGAP.

Belongs to the MET18/MMS19 family. As to quaternary structure, component of the CIA complex. Interacts with Xpd and galla-2. Binds to microtubules. As to expression, expressed in embryos (at protein level).

Its subcellular location is the cytoplasm. It is found in the cytoskeleton. It localises to the spindle. The protein resides in the nucleus. The protein localises to the midbody. Key component of the cytosolic iron-sulfur protein assembly (CIA) complex, a multiprotein complex that mediates the incorporation of iron-sulfur cluster into apoproteins specifically involved in DNA metabolism and genomic integrity. In the CIA complex, MMS19 acts as an adapter between early-acting CIA components and a subset of cellular target iron-sulfur proteins. Essential for diploid cell cycles, organ growth and development. Regulates mitosis by binding to Xpd and thereby competing with the Xpd-mediated repression on the Cdk-activating kinase (CAK) complex. Regulates the centrosomal localization of the MT regulator tacc, a downstream target of aurA kinase. Binds to microtubules (MT). Regulates spindle and astral MT growth, MT stability and bundling. In neuroblasts, necessary for timely and coordinated spindle assembly and orientation which is necessary for mitotic progression. In young embryos, the maternal protein is important for progression through mitosis. The polypeptide is MMS19 nucleotide excision repair protein (Drosophila melanogaster (Fruit fly)).